An 807-amino-acid chain; its full sequence is Glycerol-3-phosphate acyltransferase (807 aa).

An HXXXXD motif motif is present at residues 308 to 313 (CHRSHM).

This sequence belongs to the GPAT/DAPAT family.

The protein localises to the cell inner membrane. It carries out the reaction sn-glycerol 3-phosphate + an acyl-CoA = a 1-acyl-sn-glycero-3-phosphate + CoA. It functions in the pathway phospholipid metabolism; CDP-diacylglycerol biosynthesis; CDP-diacylglycerol from sn-glycerol 3-phosphate: step 1/3. The polypeptide is Glycerol-3-phosphate acyltransferase (Shewanella sp. (strain W3-18-1)).